The sequence spans 409 residues: 5-aminolevulinate synthase (409 aa).

Substrate-binding residues include Arg-21 and Ser-136. Pyridoxal 5'-phosphate-binding residues include Ser-188, His-216, and Thr-244. Lys-247 is a catalytic residue. Lys-247 is modified (N6-(pyridoxal phosphate)lysine). Residues Thr-276 and Thr-277 each coordinate pyridoxal 5'-phosphate. A substrate-binding site is contributed by Thr-362.

This sequence belongs to the class-II pyridoxal-phosphate-dependent aminotransferase family. Homodimer. Requires pyridoxal 5'-phosphate as cofactor.

It carries out the reaction succinyl-CoA + glycine + H(+) = 5-aminolevulinate + CO2 + CoA. It functions in the pathway porphyrin-containing compound metabolism; protoporphyrin-IX biosynthesis; 5-aminolevulinate from glycine: step 1/1. This Bradyrhizobium diazoefficiens (strain JCM 10833 / BCRC 13528 / IAM 13628 / NBRC 14792 / USDA 110) protein is 5-aminolevulinate synthase (hemA).